We begin with the raw amino-acid sequence, 483 residues long: Isocitrate dehydrogenase [NADP] (483 aa).

Thr-74 is a binding site for NADP(+). Ser-83, Asn-85, Arg-89, Arg-99, and Arg-121 together coordinate D-threo-isocitrate. Asp-232 provides a ligand contact to Mg(2+). NADP(+) contacts are provided by residues 264–270 (HGSAPDI) and Asn-277.

Belongs to the isocitrate and isopropylmalate dehydrogenases family. As to quaternary structure, homodimer. Mg(2+) serves as cofactor. The cofactor is Mn(2+).

It catalyses the reaction D-threo-isocitrate + NADP(+) = 2-oxoglutarate + CO2 + NADPH. Its function is as follows. Catalyzes the oxidative decarboxylation of isocitrate to 2-oxoglutarate and carbon dioxide with the concomitant reduction of NADP(+). This chain is Isocitrate dehydrogenase [NADP] (icd), found in Rickettsia felis (strain ATCC VR-1525 / URRWXCal2) (Rickettsia azadi).